The sequence spans 310 residues: MKLVFAGTPEVAVPALDALIASDRHEVAAVVTRPDAPAGRGRRLVASPVAERAQEAGIEVLKPAKPRDEEFLARLREIAPDCCPVVAYGALLPKVALDVPARGWVNLHFSLLPAWRGAAPVQHAVMAGDEVTGASTFLIEEGLDSGPVYGVLTEEVRPTDTSGDLLTRLAFAGAGLLAATMDGIEDGTLHAVPQPHEGVTLAPKITVEDAQVQWSAPALRVDRVVRGCTPAPGAWTVFRGERLKLIQATPVLDRTDLAPGELSAAKNNVYVGTGSHAVELLWVQPQGKKPMRGADWARGVRIAHGELLGP.

Residue 110-113 participates in (6S)-5,6,7,8-tetrahydrofolate binding; the sequence is SLLP.

Belongs to the Fmt family.

The catalysed reaction is L-methionyl-tRNA(fMet) + (6R)-10-formyltetrahydrofolate = N-formyl-L-methionyl-tRNA(fMet) + (6S)-5,6,7,8-tetrahydrofolate + H(+). Its function is as follows. Attaches a formyl group to the free amino group of methionyl-tRNA(fMet). The formyl group appears to play a dual role in the initiator identity of N-formylmethionyl-tRNA by promoting its recognition by IF2 and preventing the misappropriation of this tRNA by the elongation apparatus. In Streptomyces griseus subsp. griseus (strain JCM 4626 / CBS 651.72 / NBRC 13350 / KCC S-0626 / ISP 5235), this protein is Methionyl-tRNA formyltransferase.